Consider the following 502-residue polypeptide: Glycerol kinase (502 aa).

An ADP-binding site is contributed by Thr14. ATP contacts are provided by Thr14, Thr15, and Ser16. Thr14 contributes to the sn-glycerol 3-phosphate binding site. Arg18 contributes to the ADP binding site. Positions 84, 85, 136, and 246 each coordinate sn-glycerol 3-phosphate. 5 residues coordinate glycerol: Arg84, Glu85, Tyr136, Asp246, and Gln247. ADP is bound by residues Thr268 and Gly311. ATP contacts are provided by Thr268, Gly311, Gln315, and Gly412. The ADP site is built by Gly412 and Asn416.

It belongs to the FGGY kinase family.

It carries out the reaction glycerol + ATP = sn-glycerol 3-phosphate + ADP + H(+). It functions in the pathway polyol metabolism; glycerol degradation via glycerol kinase pathway; sn-glycerol 3-phosphate from glycerol: step 1/1. With respect to regulation, inhibited by fructose 1,6-bisphosphate (FBP). In terms of biological role, key enzyme in the regulation of glycerol uptake and metabolism. Catalyzes the phosphorylation of glycerol to yield sn-glycerol 3-phosphate. The polypeptide is Glycerol kinase (Pasteurella multocida (strain Pm70)).